The sequence spans 212 residues: MKLDDIRREYLYAGLSRKDLADDPIVQFKNWLQTAIDADLNADPTAMSLATVNAQGVPSQRIVLLKNLDPSGFVFYTNLGSRKAQNIAENANVSLHFAWLPMERQICVTGVAEKLSIAEATRYFLSRPHESQVAAWASQQSQGIGSRKLLEQAFEQMKNRFKQGEVPLPSFWGGYRVKPVTIEFWQGRANRLHDRFLYKKTDENWEIERLQP.

Residues 7 to 10 and Lys66 contribute to the substrate site; that span reads RREY. FMN is bound by residues 61–66, 76–77, Arg82, Lys83, and Gln105; these read RIVLLK and YT. Positions 123, 127, and 131 each coordinate substrate. FMN contacts are provided by residues 140–141 and Trp185; that span reads QS. 191-193 lines the substrate pocket; that stretch reads RLH. Arg195 is an FMN binding site.

The protein belongs to the pyridoxamine 5'-phosphate oxidase family. In terms of assembly, homodimer. The cofactor is FMN.

The enzyme catalyses pyridoxamine 5'-phosphate + O2 + H2O = pyridoxal 5'-phosphate + H2O2 + NH4(+). It carries out the reaction pyridoxine 5'-phosphate + O2 = pyridoxal 5'-phosphate + H2O2. Its pathway is cofactor metabolism; pyridoxal 5'-phosphate salvage; pyridoxal 5'-phosphate from pyridoxamine 5'-phosphate: step 1/1. It participates in cofactor metabolism; pyridoxal 5'-phosphate salvage; pyridoxal 5'-phosphate from pyridoxine 5'-phosphate: step 1/1. Its function is as follows. Catalyzes the oxidation of either pyridoxine 5'-phosphate (PNP) or pyridoxamine 5'-phosphate (PMP) into pyridoxal 5'-phosphate (PLP). The protein is Pyridoxine/pyridoxamine 5'-phosphate oxidase of Hahella chejuensis (strain KCTC 2396).